Reading from the N-terminus, the 581-residue chain is Protein phosphatase 2C 70 (581 aa).

The Extracellular segment spans residues 1 to 7; the sequence is MAMIGMN. Residues 8–28 form a helical membrane-spanning segment; it reads IIGLFMVLMLLLISLIILFAC. Residues 29–581 lie on the Cytoplasmic side of the membrane; it reads KPWRYFSRFR…IIYLDFDTSL (553 aa). The FHA domain maps to 208-259; the sequence is VKLGRVSPSDLALKDSEVSGKHAQITWNSTKFKWELVDMGSLNGTLVNSHSI. The 274-residue stretch at 304 to 577 folds into the PPM-type phosphatase domain; sequence KIGVASDPMA…DNTSIIYLDF (274 aa). Residues aspartate 346, glycine 347, aspartate 521, and aspartate 568 each contribute to the Mn(2+) site.

Association of RLK5 with kapp domain is dependent on phosphorylation of RLK5 and can be abolished by dephosphorylation. Interacts with SERK1 and CDC48A. Component of the SERK1 signaling complex, composed of KAPP, CDC48A, GRF6 or GRF7, SERK1, SERK2, SERK3/BAK1 and BRI1. Interacts with CLV1. Mg(2+) serves as cofactor. Requires Mn(2+) as cofactor. In terms of tissue distribution, expressed in all tissues examined.

It localises to the cell membrane. The catalysed reaction is O-phospho-L-seryl-[protein] + H2O = L-seryl-[protein] + phosphate. It carries out the reaction O-phospho-L-threonyl-[protein] + H2O = L-threonyl-[protein] + phosphate. Its function is as follows. Dephosphorylates the Ser/Thr receptor-like kinase RLK5. May function as a signaling component in a pathway involving RLK5. Binds and dephosphorylates CLAVATA1 (CLV1). Functions as a negative regulator of the CLV1 signaling in plant development. Dephosphorylates SERK1 receptor kinase on threonine residues in the A-loop. Dephosphorylation of SERK1 controls SERK1 internalization. Component of a signaling pathway which mediates adaptation to NaCl stress. Is not a component of the SALT OVERLY SENSITIVE (SOS) pathway. In Arabidopsis thaliana (Mouse-ear cress), this protein is Protein phosphatase 2C 70.